A 207-amino-acid chain; its full sequence is Large ribosomal subunit protein uL4 (207 aa).

A disordered region spans residues 45–78 (RQGTHAVKNRSARRGGGRKPWRQKGTGRARQGSI). Residues 51 to 71 (VKNRSARRGGGRKPWRQKGTG) show a composition bias toward basic residues.

Belongs to the universal ribosomal protein uL4 family. In terms of assembly, part of the 50S ribosomal subunit.

Its function is as follows. One of the primary rRNA binding proteins, this protein initially binds near the 5'-end of the 23S rRNA. It is important during the early stages of 50S assembly. It makes multiple contacts with different domains of the 23S rRNA in the assembled 50S subunit and ribosome. Forms part of the polypeptide exit tunnel. The protein is Large ribosomal subunit protein uL4 of Lactiplantibacillus plantarum (strain ATCC BAA-793 / NCIMB 8826 / WCFS1) (Lactobacillus plantarum).